Reading from the N-terminus, the 309-residue chain is Protein FdhE (309 aa).

Belongs to the FdhE family.

Its subcellular location is the cytoplasm. Its function is as follows. Necessary for formate dehydrogenase activity. In Salmonella paratyphi A (strain ATCC 9150 / SARB42), this protein is Protein FdhE.